Here is a 270-residue protein sequence, read N- to C-terminus: Phosphatidylglycerol--prolipoprotein diacylglyceryl transferase (270 aa).

The next 7 helical transmembrane spans lie at Leu17–Gly37, Met59–Tyr79, Trp95–Phe115, Phe129–Gly149, Pro175–Phe195, Met202–Phe222, and Leu237–Trp257. Residue Arg142 participates in a 1,2-diacyl-sn-glycero-3-phospho-(1'-sn-glycerol) binding.

The protein belongs to the Lgt family.

The protein localises to the cell inner membrane. It carries out the reaction L-cysteinyl-[prolipoprotein] + a 1,2-diacyl-sn-glycero-3-phospho-(1'-sn-glycerol) = an S-1,2-diacyl-sn-glyceryl-L-cysteinyl-[prolipoprotein] + sn-glycerol 1-phosphate + H(+). Its pathway is protein modification; lipoprotein biosynthesis (diacylglyceryl transfer). In terms of biological role, catalyzes the transfer of the diacylglyceryl group from phosphatidylglycerol to the sulfhydryl group of the N-terminal cysteine of a prolipoprotein, the first step in the formation of mature lipoproteins. The chain is Phosphatidylglycerol--prolipoprotein diacylglyceryl transferase from Cupriavidus metallidurans (strain ATCC 43123 / DSM 2839 / NBRC 102507 / CH34) (Ralstonia metallidurans).